The primary structure comprises 168 residues: Ribosome rescue factor SmrB (168 aa).

A Smr domain is found at 92–167 (LDLHGLTKEQ…GDAAILILFE (76 aa)).

The protein belongs to the SmrB family. In terms of assembly, associates with collided ribosomes, but not with correctly translating polysomes.

Its function is as follows. Acts as a ribosome collision sensor. Detects stalled/collided disomes (pairs of ribosomes where the leading ribosome is stalled and a second ribosome has collided with it) and endonucleolytically cleaves mRNA at the 5' boundary of the stalled ribosome. Stalled/collided disomes form a new interface (primarily via the 30S subunits) that binds SmrB. Cleaved mRNA becomes available for tmRNA ligation, leading to ribosomal subunit dissociation and rescue of stalled ribosomes. This is Ribosome rescue factor SmrB from Pasteurella multocida (strain Pm70).